The primary structure comprises 117 residues: Gamma-aminobutyric acid receptor-associated protein-like 2 (117 aa).

Position 24 is an N6-acetyllysine (K24). A phosphoserine mark is found at S39, S87, and S88. G116 carries the Phosphatidylethanolamine amidated glycine; alternate lipid modification. G116 carries Phosphatidylserine amidated glycine; alternate lipidation. Position 117 (F117) is a propeptide, removed in mature form.

Belongs to the ATG8 family. In terms of assembly, monomer. Interacts with ATG3, ATG7, ATG13 and ULK1. Interacts with TP53INP1 and TP53INP2. Interacts with TBC1D25. Directly interacts with SQSTM1 and BNIP3. Interacts with TECPR2 and PCM1. Interacts with TBC1D5. Interacts with TRIM5. Interacts with MEFV and TRIM21. Interacts with WDFY3. Interacts with UBA5; promoting recruitment of UBA5 to the endoplasmic reticulum membrane. Interacts with GOSR1. Interacts with KBTBD6 and KBTBD7; the interaction is direct. Interacts with reticulophagy regulators RETREG1, RETREG2 and RETREG3. Interacts with IRGM. Interacts with DNM2. Interacts with NCOA4. Interacts with IRGQ. The precursor molecule is cleaved by ATG4 (ATG4A, ATG4B, ATG4C or ATG4D) to expose the glycine at the C-terminus and form the cytosolic form, GABARAPL2-I. The processed form is then activated by APG7L/ATG7, transferred to ATG3 and conjugated to phosphatidylethanolamine (PE) phospholipid to form the membrane-bound form, GABARAPL2-II. During non-canonical autophagy, the processed form is conjugated to phosphatidylserine (PS) phospholipid. ATG4 proteins also mediate the delipidation of PE-conjugated forms required for GABARAPL2 recycling when autophagosomes fuse with lysosomes. In addition, ATG4B and ATG4D mediate delipidation of ATG8 proteins conjugated to PS during non-canonical autophagy. ATG4B constitutes the major protein for proteolytic activation. ATG4D is the main enzyme for delipidation activity. Post-translationally, phosphorylation at Ser-87 and Ser-88 by TBK1 prevents interaction with ATG4 (ATG4A, ATG4B, ATG4C or ATG4D). Phosphorylation by TBK1 on autophagosomes prevents their delipidation by ATG4 and premature removal from nascent autophagosomes. As to expression, ubiquitous. Expressed at high levels in the brain, heart, prostate, ovary, spleen and skeletal muscle. Expressed at very low levels in lung, thymus and small intestine.

Its subcellular location is the cytoplasmic vesicle. The protein localises to the autophagosome. It localises to the endoplasmic reticulum membrane. The protein resides in the golgi apparatus. In terms of biological role, ubiquitin-like modifier involved in intra-Golgi traffic. Modulates intra-Golgi transport through coupling between NSF activity and SNAREs activation. It first stimulates the ATPase activity of NSF which in turn stimulates the association with GOSR1. Involved in autophagy. Plays a role in mitophagy which contributes to regulate mitochondrial quantity and quality by eliminating the mitochondria to a basal level to fulfill cellular energy requirements and preventing excess ROS production. Whereas LC3s are involved in elongation of the phagophore membrane, the GABARAP/GATE-16 subfamily is essential for a later stage in autophagosome maturation. This chain is Gamma-aminobutyric acid receptor-associated protein-like 2, found in Bos taurus (Bovine).